Consider the following 301-residue polypeptide: uncharacterized protein (301 aa).

One can recognise a Radical SAM core domain in the interval 45 to 286; it reads KELSDGWALN…EELGKMFTEL (242 aa).

This is an uncharacterized protein from Acidianus two-tailed virus (ATV).